Consider the following 388-residue polypeptide: Glycoprotein-N-acetylgalactosamine 3-beta-galactosyltransferase 1 (388 aa).

Topologically, residues 1–12 (MAPISHYIGKTS) are cytoplasmic. The helical; Signal-anchor for type II membrane protein transmembrane segment at 13–30 (LTTLAIGIAIGITVSNIV) threads the bilayer. At 31 to 388 (KFSSTQRRHF…LAQTDSKHIS (358 aa)) the chain is on the lumenal side. The segment at 43–65 (SGYIPDSPHSHGENDFVEGPDDS) is disordered. Asn-80 carries an N-linked (GlcNAc...) asparagine glycan. A disulfide bridge connects residues Cys-95 and Cys-119. Positions 98, 100, 142, 143, 144, 150, and 173 each coordinate UDP. Residues Asp-173 and Asp-175 each coordinate Mn(2+). An intrachain disulfide couples Cys-238 to Cys-253. A glycoprotein is bound at residue Trp-292. Cys-307 and Cys-308 are joined by a disulfide. UDP is bound by residues His-316 and Tyr-317. Residue His-316 coordinates Mn(2+). The tract at residues 344-388 (STEEQDHGSSHKDTDAMKPEGKGMEDKEDEETNISLAQTDSKHIS) is disordered. Positions 347-368 (EQDHGSSHKDTDAMKPEGKGME) are enriched in basic and acidic residues. N-linked (GlcNAc...) asparagine glycosylation occurs at Asn-376.

This sequence belongs to the glycosyltransferase 31 family. Beta3-Gal-T subfamily. In terms of assembly, homodimer; disulfide-linked. Requires Mn(2+) as cofactor.

It is found in the membrane. It carries out the reaction an N-acetyl-alpha-D-galactosaminyl derivative + UDP-alpha-D-galactose = a beta-D-galactosyl-(1-&gt;3)-N-acetyl-alpha-D-galactosaminyl derivative + UDP + H(+). It functions in the pathway protein modification; protein glycosylation. Its function is as follows. Glycosyltransferase that generates the core 1 O-glycan Gal-beta1-3GalNAc-alpha1-Ser/Thr (T antigen), which is a precursor for many extended O-glycans in glycoproteins. The protein is Glycoprotein-N-acetylgalactosamine 3-beta-galactosyltransferase 1 of Biomphalaria glabrata (Bloodfluke planorb).